Consider the following 59-residue polypeptide: Large ribosomal subunit protein bL32 (59 aa).

The interval 1–59 (MAVQQNKKSPSKRGMHRSHDALTAPALFVDSTTGEVHRPHHISPNGMYRGRKVVKAKGE) is disordered. Residues 49–59 (RGRKVVKAKGE) are compositionally biased toward basic residues.

This sequence belongs to the bacterial ribosomal protein bL32 family.

This chain is Large ribosomal subunit protein bL32, found in Neisseria gonorrhoeae (strain ATCC 700825 / FA 1090).